The sequence spans 156 residues: Small ribosomal subunit protein uS7 (156 aa).

The protein belongs to the universal ribosomal protein uS7 family. As to quaternary structure, part of the 30S ribosomal subunit. Contacts proteins S9 and S11.

One of the primary rRNA binding proteins, it binds directly to 16S rRNA where it nucleates assembly of the head domain of the 30S subunit. Is located at the subunit interface close to the decoding center, probably blocks exit of the E-site tRNA. The sequence is that of Small ribosomal subunit protein uS7 from Pelagibacter ubique (strain HTCC1062).